We begin with the raw amino-acid sequence, 316 residues long: Nucleotide-binding protein Sala_2050 (316 aa).

Residue Gly-18–Ser-25 participates in ATP binding. Asp-69–Ser-72 lines the GTP pocket. Residues Gly-283 to Arg-316 form a disordered region.

Belongs to the RapZ-like family.

Its function is as follows. Displays ATPase and GTPase activities. The sequence is that of Nucleotide-binding protein Sala_2050 from Sphingopyxis alaskensis (strain DSM 13593 / LMG 18877 / RB2256) (Sphingomonas alaskensis).